Consider the following 208-residue polypeptide: Sodium/potassium-transporting ATPase subunit beta-1-interacting protein 4 (208 aa).

3 helical membrane passes run 35 to 55 (APIL…FGTI), 62 to 82 (VMVY…IICF), and 151 to 171 (CLQI…VSVF).

The protein belongs to the NKAIN family. Interacts with ATP1B1.

It localises to the cell membrane. This Homo sapiens (Human) protein is Sodium/potassium-transporting ATPase subunit beta-1-interacting protein 4 (NKAIN4).